Here is a 469-residue protein sequence, read N- to C-terminus: Putative dipeptidase SE_1424 (469 aa).

Residue H84 coordinates Zn(2+). D86 is an active-site residue. D115 serves as a coordination point for Zn(2+). The active-site Proton acceptor is E149. Zn(2+) contacts are provided by E150, D173, and H440.

The protein belongs to the peptidase M20A family. The cofactor is Zn(2+).

This Staphylococcus epidermidis (strain ATCC 12228 / FDA PCI 1200) protein is Putative dipeptidase SE_1424.